We begin with the raw amino-acid sequence, 420 residues long: 3-isopropylmalate dehydratase large subunit (420 aa).

[4Fe-4S] cluster contacts are provided by C300, C360, and C363.

This sequence belongs to the aconitase/IPM isomerase family. LeuC type 2 subfamily. In terms of assembly, heterodimer of LeuC and LeuD. Requires [4Fe-4S] cluster as cofactor.

The catalysed reaction is (2R,3S)-3-isopropylmalate = (2S)-2-isopropylmalate. The protein operates within amino-acid biosynthesis; L-leucine biosynthesis; L-leucine from 3-methyl-2-oxobutanoate: step 2/4. In terms of biological role, catalyzes the isomerization between 2-isopropylmalate and 3-isopropylmalate, via the formation of 2-isopropylmaleate. The polypeptide is 3-isopropylmalate dehydratase large subunit (Halothermothrix orenii (strain H 168 / OCM 544 / DSM 9562)).